Consider the following 347-residue polypeptide: N-acetyl-gamma-glutamyl-phosphate reductase (347 aa).

Cys150 is an active-site residue.

The protein belongs to the NAGSA dehydrogenase family. Type 1 subfamily.

It localises to the cytoplasm. The catalysed reaction is N-acetyl-L-glutamate 5-semialdehyde + phosphate + NADP(+) = N-acetyl-L-glutamyl 5-phosphate + NADPH + H(+). It functions in the pathway amino-acid biosynthesis; L-arginine biosynthesis; N(2)-acetyl-L-ornithine from L-glutamate: step 3/4. In terms of biological role, catalyzes the NADPH-dependent reduction of N-acetyl-5-glutamyl phosphate to yield N-acetyl-L-glutamate 5-semialdehyde. The polypeptide is N-acetyl-gamma-glutamyl-phosphate reductase (Halothermothrix orenii (strain H 168 / OCM 544 / DSM 9562)).